Reading from the N-terminus, the 539-residue chain is Trigger factor (539 aa).

The region spanning 163-252 (GDQLTVQIET…VLDVQERLLP (90 aa)) is the PPIase FKBP-type domain. Low complexity-rich tracts occupy residues 434–447 (SFEQAASPEAASEP) and 475–484 (AASPEAASEP). The disordered stretch occupies residues 434–539 (SFEQAASPEA…DVATPEARTE (106 aa)). Over residues 509–528 (TETPIVSQEENGESVENQSV) the composition is skewed to polar residues.

Belongs to the FKBP-type PPIase family. Tig subfamily.

The protein localises to the cytoplasm. The catalysed reaction is [protein]-peptidylproline (omega=180) = [protein]-peptidylproline (omega=0). In terms of biological role, involved in protein export. Acts as a chaperone by maintaining the newly synthesized protein in an open conformation. Functions as a peptidyl-prolyl cis-trans isomerase. The chain is Trigger factor from Roseiflexus sp. (strain RS-1).